Reading from the N-terminus, the 102-residue chain is Large ribosomal subunit protein bL28 (102 aa).

Polar residues predominate over residues 1–20; that stretch reads MSNSCDLTGHGWQNGNMVSH. The segment at 1–27 is disordered; it reads MSNSCDLTGHGWQNGNMVSHSNRKTKK.

This sequence belongs to the bacterial ribosomal protein bL28 family.

This chain is Large ribosomal subunit protein bL28, found in Neorickettsia sennetsu (strain ATCC VR-367 / Miyayama) (Ehrlichia sennetsu).